The chain runs to 218 residues: Response regulator UvrY (218 aa).

One can recognise a Response regulatory domain in the interval Asn-3–Tyr-119. Asp-54 carries the 4-aspartylphosphate modification. The HTH luxR-type domain maps to Thr-143–Gly-208. The segment at residues Val-167–Tyr-186 is a DNA-binding region (H-T-H motif).

Post-translationally, phosphorylated and activated by BarA.

It is found in the cytoplasm. Member of the two-component regulatory system UvrY/BarA involved in the regulation of carbon metabolism via the CsrA/CsrB regulatory system. UvrY activates the transcription of the untranslated csrB RNA and of barA, in an autoregulatory loop. Mediates the effects of CsrA on csrB RNA by BarA-dependent and BarA-independent mechanisms. The protein is Response regulator UvrY (uvrY) of Escherichia coli (strain K12).